The primary structure comprises 436 residues: MRLARLLRGAALAGPGPGLRAAGFSRSFSSDSGSSPASERGVPGQVDFYARFSPSPLSMKQFLDFGSVNACEKTSFMFLRQELPVRLANIMKEISLLPDNLLRTPSVQLVQSWYIQSLQELLDFKDKSAEDAKAIYDFTDTVIRIRNRHNDVIPTMAQGVIEYKESFGVDPVTSQNVQYFLDRFYMSRISIRMLLNQHSLLFGGKGKGSPSHRKHIGSINPNCNVLEVIKDGYENARRLCDLYYINSPELELEELNAKSPGQPIQVVYVPSHLYHMVFELFKNAMRATMEHHANRGVYPPIQVHVTLGNEDLTVKMSDRGGGVPLRKIDRLFNYMYSTAPRPRVETSRAVPLAGFGYGLPISRLYAQYFQGDLKLYSLEGYGTDAVIYIKALSTDSIERLPVYNKAAWKHYNTNHEADDWCVPSREPKDMTTFRSA.

The N-terminal 28 residues, 1 to 28 (MRLARLLRGAALAGPGPGLRAAGFSRSF), are a transit peptide targeting the mitochondrion. Tyr136 carries the phosphotyrosine; by FGFR1 modification. Positions 163 to 393 (YKESFGVDPV…DAVIYIKALS (231 aa)) constitute a Histidine kinase domain. At Tyr243 the chain carries Phosphotyrosine; by FGFR1, ABL1, FLT3 and JAK2. Position 244 is a phosphotyrosine; by FGFR1 (Tyr244). ATP-binding positions include 279–286 (ELFKNAMR), Asp318, 337–338 (ST), and 354–359 (GFGYGL). At Thr338 the chain carries Phosphothreonine. Lys405 carries the post-translational modification N6-succinyllysine.

It belongs to the PDK/BCKDK protein kinase family. In terms of assembly, homodimer, and heterodimer with PDK2. Interacts with the pyruvate dehydrogenase complex subunit DLAT, and is part of the multimeric pyruvate dehydrogenase complex that contains multiple copies of pyruvate dehydrogenase (E1), dihydrolipoamide acetyltransferase (DLAT, E2) and lipoamide dehydrogenase (DLD, E3). Interacts with phosphoglycerate kinase PGK1; the interaction is direct, occurs under hypoxic conditions and leads to PDK1-mediated inhibition of pyruvate dehydrogenase complex activity. In terms of processing, phosphorylated by constitutively activated ABL1, FGFR1, FLT3 and JAK2 (in vitro), and this may also occur in cancer cells that express constitutively activated ABL1, FGFR1, FLT3 and JAK2. Phosphorylation at Tyr-243 and Tyr-244 strongly increases kinase activity, while phosphorylation at Tyr-136 has a lesser effect. Phosphorylated under hypoxic conditions at Thr-338 by phosphoglycerate kinase PGK1 which has an activating effect. In terms of tissue distribution, expressed predominantly in the heart. Detected at lower levels in liver, skeletal muscle and pancreas.

The protein localises to the mitochondrion matrix. It carries out the reaction L-seryl-[pyruvate dehydrogenase E1 alpha subunit] + ATP = O-phospho-L-seryl-[pyruvate dehydrogenase E1 alpha subunit] + ADP + H(+). Its activity is regulated as follows. Activity is enhanced by binding to the pyruvate dehydrogenase subunit DLAT. Inhibited by AZD7545; this compound interferes with DLAT binding and thereby inhibits kinase activity. Inhibited by dichloroacetate and radicicol. Activated under hypoxic conditions by phosphoglycerate kinase PGK1-mediated phosphorylation at Thr-338. Its function is as follows. Kinase that plays a key role in regulation of glucose and fatty acid metabolism and homeostasis via phosphorylation of the pyruvate dehydrogenase subunits PDHA1 and PDHA2. This inhibits pyruvate dehydrogenase activity, and thereby regulates metabolite flux through the tricarboxylic acid cycle, down-regulates aerobic respiration and inhibits the formation of acetyl-coenzyme A from pyruvate. Plays an important role in cellular responses to hypoxia and is important for cell proliferation under hypoxia. The chain is [Pyruvate dehydrogenase (acetyl-transferring)] kinase isozyme 1, mitochondrial (PDK1) from Homo sapiens (Human).